The chain runs to 547 residues: MARYVFITGGVVSSLGKGLASAALGALLQARGFSVRLRKLDPYLNVDPGTMSPFEHGEVFVTDDGAETDLDLGHYERFTGVSARKTDSVSSGRIYSNVLEKERRGDYLGKTIQVIPHVTNEIKDFLRVGEDEVDFMLCEIGGTVGDIEGLPFFEAIRQFAQDKPRGQCIFVHLTLLPYVSASGELKTKPTQHSVKELRSIGIAPDVLLLRSERAIPEKEREKIALFCNVRKEAVIAAYDLKTIYEAPLAYHREGLDQAVLDAFGISPAPKPNLDRWVDVMDRLENAEGEVRVAIVGKYTQLEDAYKSIAEALTHGGMANRTRVRAEWINAELFEREDPSPFLEGFHAILVPGGFGERGTEGKIRAAQYAREKGIPYLGICLGMQMAVIEAARNLAQVKDAGSEEFDHEVGKKRFTPVVYHLKEWIQGNHIVERKHDDDKGGTMRLGAYTAALTPGSRVSEIYHATEIEERHRHRYEVDVRYREALEGCGLTFSGMSPDGRLPEIVEIKDHPWFIGVQFHPELKSKPFAPHPLFADFVRAAVEVSRLV.

Residues 1-265 form an amidoligase domain region; it reads MARYVFITGG…DQAVLDAFGI (265 aa). S13 lines the CTP pocket. S13 provides a ligand contact to UTP. Residues 14–19 and D71 contribute to the ATP site; that span reads SLGKGL. 2 residues coordinate Mg(2+): D71 and E139. CTP is bound by residues 146-148, 186-191, and K222; these read DIE and KTKPTQ. UTP-binding positions include 186-191 and K222; that span reads KTKPTQ. A Glutamine amidotransferase type-1 domain is found at 291 to 546; sequence RVAIVGKYTQ…VRAAVEVSRL (256 aa). Residue G353 coordinates L-glutamine. Catalysis depends on C380, which acts as the Nucleophile; for glutamine hydrolysis. Residues 381 to 384, E404, and R474 contribute to the L-glutamine site; that span reads LGMQ. Residues H519 and E521 contribute to the active site.

It belongs to the CTP synthase family. As to quaternary structure, homotetramer.

The catalysed reaction is UTP + L-glutamine + ATP + H2O = CTP + L-glutamate + ADP + phosphate + 2 H(+). It carries out the reaction L-glutamine + H2O = L-glutamate + NH4(+). The enzyme catalyses UTP + NH4(+) + ATP = CTP + ADP + phosphate + 2 H(+). Its pathway is pyrimidine metabolism; CTP biosynthesis via de novo pathway; CTP from UDP: step 2/2. Allosterically activated by GTP, when glutamine is the substrate; GTP has no effect on the reaction when ammonia is the substrate. The allosteric effector GTP functions by stabilizing the protein conformation that binds the tetrahedral intermediate(s) formed during glutamine hydrolysis. Inhibited by the product CTP, via allosteric rather than competitive inhibition. Functionally, catalyzes the ATP-dependent amination of UTP to CTP with either L-glutamine or ammonia as the source of nitrogen. Regulates intracellular CTP levels through interactions with the four ribonucleotide triphosphates. This is CTP synthase from Cereibacter sphaeroides (strain ATCC 17029 / ATH 2.4.9) (Rhodobacter sphaeroides).